The following is a 777-amino-acid chain: Rho-GTPase-activating protein 8 (777 aa).

The F-BAR domain maps to 3-420; it reads SSFSNGFWSK…YQEIIQPESD (418 aa). Residues 117 to 172 adopt a coiled-coil conformation; that stretch reads QKLQTSQQVLTNQIKSYEKKYYTLKKTKSAYYNKCRNLEDYEEESKESNETTSEAI. Residues 213 to 296 form the DEP domain; it reads VLQEIPLQDY…WKDKAFQFAG (84 aa). Residues 454–650 form the Rho-GAP domain; that stretch reads VDVEFLSHRD…DLLTYGPSIF (197 aa). The tract at residues 667–709 is disordered; it reads LYQSSATPRSTDVSPTRPDSISSVRSHTAVESPRSSFEELQPS. The segment covering 668-692 has biased composition (polar residues); sequence YQSSATPRSTDVSPTRPDSISSVRS. 2 positions are modified to phosphoserine: serine 676 and serine 680. Position 682 is a phosphothreonine (threonine 682). At serine 686 the chain carries Phosphoserine. Residue threonine 694 is modified to Phosphothreonine. At serine 698 the chain carries Phosphoserine.

Interacts with pak1/shk1. In terms of processing, phosphorylated by pak1/shk1.

It localises to the cytoplasm. Its function is as follows. Acts in signal transduction. Negatively regulates the pak1/shk1 control pathway. This is Rho-GTPase-activating protein 8 (rga8) from Schizosaccharomyces pombe (strain 972 / ATCC 24843) (Fission yeast).